A 1216-amino-acid polypeptide reads, in one-letter code: DNA-directed RNA polymerase subunit beta' (1216 aa).

Residues Cys60, Cys62, Cys75, and Cys78 each contribute to the Zn(2+) site. Residues Asp450, Asp452, and Asp454 each contribute to the Mg(2+) site. Zn(2+) is bound by residues Cys819, Cys893, Cys900, and Cys903.

This sequence belongs to the RNA polymerase beta' chain family. In terms of assembly, the RNAP catalytic core consists of 2 alpha, 1 beta, 1 beta' and 1 omega subunit. When a sigma factor is associated with the core the holoenzyme is formed, which can initiate transcription. Requires Mg(2+) as cofactor. Zn(2+) serves as cofactor.

It catalyses the reaction RNA(n) + a ribonucleoside 5'-triphosphate = RNA(n+1) + diphosphate. In terms of biological role, DNA-dependent RNA polymerase catalyzes the transcription of DNA into RNA using the four ribonucleoside triphosphates as substrates. This is DNA-directed RNA polymerase subunit beta' from Streptococcus agalactiae serotype Ia (strain ATCC 27591 / A909 / CDC SS700).